A 120-amino-acid polypeptide reads, in one-letter code: Small ribosomal subunit protein bS16 (120 aa).

The interval 84 to 120 (KRESRNNPQQGQPKKKAQERAAAAAAAAEKAASEAAA) is disordered. Over residues 103 to 120 (RAAAAAAAAEKAASEAAA) the composition is skewed to low complexity.

The protein belongs to the bacterial ribosomal protein bS16 family.

This chain is Small ribosomal subunit protein bS16, found in Beijerinckia indica subsp. indica (strain ATCC 9039 / DSM 1715 / NCIMB 8712).